The sequence spans 146 residues: Peptide methionine sulfoxide reductase MsrB (146 aa).

Residues 2–125 (LKKNKDELND…NSAAVQFIPY (124 aa)) enclose the MsrB domain. The Nucleophile role is filled by C114.

Belongs to the MsrB Met sulfoxide reductase family.

The catalysed reaction is L-methionyl-[protein] + [thioredoxin]-disulfide + H2O = L-methionyl-(R)-S-oxide-[protein] + [thioredoxin]-dithiol. The polypeptide is Peptide methionine sulfoxide reductase MsrB (Staphylococcus carnosus (strain TM300)).